The sequence spans 702 residues: Dynein axonemal intermediate chain 1 (702 aa).

Residues 1-58 are disordered; the sequence is MLPASSKMPHKQPPPPRKQSISMGRGARKRDEDSGTEVGEGTDEWVQSKATVKPPDQL. Phosphoserine is present on residues Ser-134 and Ser-137. WD repeat units lie at residues 383-423, 432-475, 540-580, 582-622, and 630-669; these read SSES…SQPS, KHTD…LVHT, AHNM…PMFI, DLNS…YEAI, and KKKN…RKMP.

Belongs to the dynein intermediate chain family. Consists of at least two heavy chains and a number of intermediate and light chains. Interacts with BICD2. Interacts with CFAP45 and CFAP52. Interacts with CFAP53.

It localises to the cytoplasm. The protein resides in the cytoskeleton. The protein localises to the cilium axoneme. Part of the dynein complex of respiratory cilia. The chain is Dynein axonemal intermediate chain 1 (DNAI1) from Bos taurus (Bovine).